Consider the following 764-residue polypeptide: Nucleolar complex-associated protein 2 (764 aa).

A coiled-coil region spans residues 3 to 69 (AKDDKKRVKK…EEELKRLQEK (67 aa)). Disordered stretches follow at residues 23–67 (ELNN…KRLQ), 89–113 (ATEI…EGDD), 627–646 (AVFG…DRME), and 651–726 (AFNS…EDDA). Residues 30-41 (IDAHDIVMEQKS) show a composition bias toward basic and acidic residues. The span at 42 to 51 (DKKRGKKVKS) shows a compositional bias: basic residues. The span at 52 to 67 (KKAEAEEHEEELKRLQ) shows a compositional bias: basic and acidic residues. Over residues 90–113 (TEIEDDADVEPDTDLEDTEKEGDD) the composition is skewed to acidic residues. Over residues 661-672 (DSKEKEPEEEKT) the composition is skewed to basic and acidic residues. Residues 673–680 (KKKKRKRG) carry the Nuclear localization signal 1 motif. Positions 673 to 682 (KKKKRKRGGK) are enriched in basic residues. Residues 693–726 (GLGEDDVVEDFVLSSDEEEEDLFDIGGDKDEDDA) show a composition bias toward acidic residues. A Nuclear localization signal 2 motif is present at residues 738–745 (SKKTKGTY).

Belongs to the NOC2 family. Component of nucleolar complexes. Forms homodimers. Interacts with RBL and NOC3 in both the nucleolus and nucleoplasm. Binds to SWA2.

The protein resides in the nucleus. The protein localises to the nucleolus. It is found in the nucleoplasm. Functionally, together with SWA2, probably involved in pre-ribosome export from the nucleus to the cytoplasm. The polypeptide is Nucleolar complex-associated protein 2 (Arabidopsis thaliana (Mouse-ear cress)).